Consider the following 808-residue polypeptide: Protein translocase subunit SecA (808 aa).

ATP is bound by residues Q87, 105–109 (GEGKT), and D493.

The protein belongs to the SecA family. Monomer and homodimer. Part of the essential Sec protein translocation apparatus which comprises SecA, SecYEG and auxiliary proteins SecDF. Other proteins may also be involved.

Its subcellular location is the cell membrane. The protein resides in the cytoplasm. It catalyses the reaction ATP + H2O + cellular proteinSide 1 = ADP + phosphate + cellular proteinSide 2.. Part of the Sec protein translocase complex. Interacts with the SecYEG preprotein conducting channel. Has a central role in coupling the hydrolysis of ATP to the transfer of proteins into and across the cell membrane, serving as an ATP-driven molecular motor driving the stepwise translocation of polypeptide chains across the membrane. The protein is Protein translocase subunit SecA of Mycoplasma pneumoniae (strain ATCC 29342 / M129 / Subtype 1) (Mycoplasmoides pneumoniae).